The primary structure comprises 288 residues: ATP synthase gamma chain (288 aa).

Belongs to the ATPase gamma chain family. F-type ATPases have 2 components, CF(1) - the catalytic core - and CF(0) - the membrane proton channel. CF(1) has five subunits: alpha(3), beta(3), gamma(1), delta(1), epsilon(1). CF(0) has three main subunits: a, b and c.

Its subcellular location is the cell inner membrane. Produces ATP from ADP in the presence of a proton gradient across the membrane. The gamma chain is believed to be important in regulating ATPase activity and the flow of protons through the CF(0) complex. The sequence is that of ATP synthase gamma chain from Rickettsia felis (strain ATCC VR-1525 / URRWXCal2) (Rickettsia azadi).